We begin with the raw amino-acid sequence, 355 residues long: NADH dehydrogenase [ubiquinone] 1 alpha subcomplex subunit 10, mitochondrial (355 aa).

Residues 1–35 (MALRLLKLGATSASARVVAAGAQRVRGIHSSGQCK) constitute a mitochondrion transit peptide. The residue at position 250 (Ser250) is a Phosphoserine; by PINK1. Lys285 is subject to N6-succinyllysine.

Belongs to the complex I NDUFA10 subunit family. In terms of assembly, complex I is composed of 45 different subunits. This a component of the hydrophobic protein fraction. Requires FAD as cofactor. Post-translationally, phosphorylation at Ser-250 by PINK1 is required for the binding and/or reduction of the complex I substrate ubiquinone.

Its subcellular location is the mitochondrion matrix. Functionally, accessory subunit of the mitochondrial membrane respiratory chain NADH dehydrogenase (Complex I), that is believed not to be involved in catalysis. Complex I functions in the transfer of electrons from NADH to the respiratory chain. The immediate electron acceptor for the enzyme is believed to be ubiquinone. The sequence is that of NADH dehydrogenase [ubiquinone] 1 alpha subcomplex subunit 10, mitochondrial (NDUFA10) from Gorilla gorilla gorilla (Western lowland gorilla).